We begin with the raw amino-acid sequence, 224 residues long: MSDVWQQQRQRMVDEQLRPRGIHDQRILAAMANVPRHLFVPEALQAQAYSDQALPLTLGQTISQPYIVALMAQELLLNPHEQLLEIGAGSGYAAAVFAELVRKVVTIERHQALAQQTQVRLRNLGYVNIEVVWGDGSLGYPTAAPYHAISIPAATPQLAQTLLSQLHDGGRLVAPIGDAQDQQLIRLQRQGQNWQKTTISNVRFVPLIGAGGWEHAPETTAEGE.

Residue S63 is part of the active site.

This sequence belongs to the methyltransferase superfamily. L-isoaspartyl/D-aspartyl protein methyltransferase family.

It localises to the cytoplasm. It carries out the reaction [protein]-L-isoaspartate + S-adenosyl-L-methionine = [protein]-L-isoaspartate alpha-methyl ester + S-adenosyl-L-homocysteine. Functionally, catalyzes the methyl esterification of L-isoaspartyl residues in peptides and proteins that result from spontaneous decomposition of normal L-aspartyl and L-asparaginyl residues. It plays a role in the repair and/or degradation of damaged proteins. This Herpetosiphon aurantiacus (strain ATCC 23779 / DSM 785 / 114-95) protein is Protein-L-isoaspartate O-methyltransferase.